The primary structure comprises 340 residues: Fructose-1,6-bisphosphatase class 1 (340 aa).

Glu107, Asp126, Leu128, and Asp129 together coordinate Mg(2+). Residue Asn215 participates in substrate binding. Mg(2+) is bound at residue Glu287.

Belongs to the FBPase class 1 family. As to quaternary structure, homotetramer. Requires Mg(2+) as cofactor.

It is found in the cytoplasm. It carries out the reaction beta-D-fructose 1,6-bisphosphate + H2O = beta-D-fructose 6-phosphate + phosphate. The protein operates within carbohydrate biosynthesis; gluconeogenesis. This is Fructose-1,6-bisphosphatase class 1 from Brucella suis (strain ATCC 23445 / NCTC 10510).